A 132-amino-acid chain; its full sequence is Small ribosomal subunit protein uS8 (132 aa).

The protein belongs to the universal ribosomal protein uS8 family. In terms of assembly, part of the 30S ribosomal subunit. Contacts proteins S5 and S12.

Its function is as follows. One of the primary rRNA binding proteins, it binds directly to 16S rRNA central domain where it helps coordinate assembly of the platform of the 30S subunit. This chain is Small ribosomal subunit protein uS8, found in Renibacterium salmoninarum (strain ATCC 33209 / DSM 20767 / JCM 11484 / NBRC 15589 / NCIMB 2235).